A 471-amino-acid polypeptide reads, in one-letter code: ATP synthase subunit beta (471 aa).

156 to 163 lines the ATP pocket; sequence GGAGVGKT.

Belongs to the ATPase alpha/beta chains family. In terms of assembly, F-type ATPases have 2 components, CF(1) - the catalytic core - and CF(0) - the membrane proton channel. CF(1) has five subunits: alpha(3), beta(3), gamma(1), delta(1), epsilon(1). CF(0) has three main subunits: a(1), b(2) and c(9-12). The alpha and beta chains form an alternating ring which encloses part of the gamma chain. CF(1) is attached to CF(0) by a central stalk formed by the gamma and epsilon chains, while a peripheral stalk is formed by the delta and b chains.

It localises to the cell membrane. The enzyme catalyses ATP + H2O + 4 H(+)(in) = ADP + phosphate + 5 H(+)(out). Produces ATP from ADP in the presence of a proton gradient across the membrane. The catalytic sites are hosted primarily by the beta subunits. This Lysinibacillus sphaericus (strain C3-41) protein is ATP synthase subunit beta.